Reading from the N-terminus, the 591-residue chain is MRSHYCGDVNKSHVGQEVTLVGWVNRSRDLGGVVFLDLRDREGLVQVVYDPDLPEVFNVASTLRAEFCVQVKGVVRARPDSQVNAQMKTGEIEVLGKALTIINSSEPLPLSLDNYQNNSEEQRLKYRYLDLRRPEMAQRLMFRAKVTSAVRRFLDSNGFLDIETPILTKATPEGARDYLVPSRTYKGQFFALPQSPQLFKQLLMMSGFDRYYQIVKCFRDEDLRADRQPEFTQIDIETSFMTSEQVMNKTEEMMRGLFLEMLNVDLGEFPRMTYNEAMRRFGSDKPDLRNPLELVDVADLLKDVEFAVFSGPANDEEGRVAALRIPGGASLSRKQIDDYTKFVGIYGAKGLAWMKLNDLTQGLEGIQSPVLKFLNENIVNEIINRTGAQTGDIILFGADQATVVAESMGALRLKAGEDFNLLEGQWRPLWVVDFPMFEKINGSFHAVHHPFTAPRGVTPQELEANPANRVSDAYDMVLNGCELGGGSVRIHNQEMQSAVFRILGITDEEAKEKFGFLLEALRYGTPPHAGLAFGLDRIIMLMTGASSIRDVMAFPKTTTAACPLTNAPGFANPQQLAELGIAVVKTAKTED.

Residue Glu173 coordinates L-aspartate. An aspartate region spans residues 197-200 (QLFK). Residue Arg219 coordinates L-aspartate. ATP-binding positions include 219 to 221 (RDE) and Gln228. Residue His448 coordinates L-aspartate. Glu482 is a binding site for ATP. Residue Arg489 coordinates L-aspartate. 534–537 (GLDR) lines the ATP pocket.

This sequence belongs to the class-II aminoacyl-tRNA synthetase family. Type 1 subfamily. In terms of assembly, homodimer.

Its subcellular location is the cytoplasm. It carries out the reaction tRNA(Asp) + L-aspartate + ATP = L-aspartyl-tRNA(Asp) + AMP + diphosphate. Functionally, catalyzes the attachment of L-aspartate to tRNA(Asp) in a two-step reaction: L-aspartate is first activated by ATP to form Asp-AMP and then transferred to the acceptor end of tRNA(Asp). In Shewanella oneidensis (strain ATCC 700550 / JCM 31522 / CIP 106686 / LMG 19005 / NCIMB 14063 / MR-1), this protein is Aspartate--tRNA ligase.